The following is a 104-amino-acid chain: UPF0213 protein PA3854 (104 aa).

Positions 13-88 constitute a GIY-YIG domain; sequence KCWSVYLVRA…KALSKRAKER (76 aa).

It belongs to the UPF0213 family.

This chain is UPF0213 protein PA3854, found in Pseudomonas aeruginosa (strain ATCC 15692 / DSM 22644 / CIP 104116 / JCM 14847 / LMG 12228 / 1C / PRS 101 / PAO1).